Consider the following 458-residue polypeptide: Histidine--tRNA ligase (458 aa).

Belongs to the class-II aminoacyl-tRNA synthetase family. Homodimer.

It localises to the cytoplasm. The catalysed reaction is tRNA(His) + L-histidine + ATP = L-histidyl-tRNA(His) + AMP + diphosphate + H(+). This Micrococcus luteus (strain ATCC 4698 / DSM 20030 / JCM 1464 / CCM 169 / CCUG 5858 / IAM 1056 / NBRC 3333 / NCIMB 9278 / NCTC 2665 / VKM Ac-2230) (Micrococcus lysodeikticus) protein is Histidine--tRNA ligase.